Reading from the N-terminus, the 442-residue chain is MRGNFMSSIEKLGGLKQRLTITVPAEEVDKAYKSRLLKVARTAKIPKFRPGKASPAVVEKLYGKAILQEVGSELIQSSLREAVEEHQLRVAGAPDIKMDKILRGEPFKYVVNFEVYPEITLESLAGETIERTQVEITEEDLDKMLEALRKQYAEWKEMDRPAKADDRVIIDFEGTLDGKPFERGSAKDFQLELGSKRMIAGFEEGIEGMKPGESKALDITFPADYPSEDLAGKAAVFNITLQKVMAPELPVLDEQFAERLGIKEGGLEALRQKVRTNMEKEVHHHMENKLKMAVLDKLIERNPIEVPESLIEAEIDHLQQMTRQQVAMQTHKPDEAKKMELPRDPYREQATKRVKLGLLLAEVVKQHKIKADPEQLRARVEEVAASYQDPEKVISWYYTNKQMLSEIESVVLEDQAVAQLMSELEVKDQAIPYEEAVKQIQQ.

Residues D165–P250 form the PPIase FKBP-type domain.

The protein belongs to the FKBP-type PPIase family. Tig subfamily.

It is found in the cytoplasm. The enzyme catalyses [protein]-peptidylproline (omega=180) = [protein]-peptidylproline (omega=0). Involved in protein export. Acts as a chaperone by maintaining the newly synthesized protein in an open conformation. Functions as a peptidyl-prolyl cis-trans isomerase. This chain is Trigger factor, found in Coxiella burnetii (strain RSA 493 / Nine Mile phase I).